A 901-amino-acid polypeptide reads, in one-letter code: Protein translocase subunit SecA (901 aa).

Residues Gln-87, 105–109 (GEGKT), and Asp-512 contribute to the ATP site. Zn(2+) contacts are provided by Cys-885, Cys-887, Cys-896, and His-897.

The protein belongs to the SecA family. In terms of assembly, monomer and homodimer. Part of the essential Sec protein translocation apparatus which comprises SecA, SecYEG and auxiliary proteins SecDF-YajC and YidC. Zn(2+) is required as a cofactor.

Its subcellular location is the cell inner membrane. The protein localises to the cytoplasm. The enzyme catalyses ATP + H2O + cellular proteinSide 1 = ADP + phosphate + cellular proteinSide 2.. Functionally, part of the Sec protein translocase complex. Interacts with the SecYEG preprotein conducting channel. Has a central role in coupling the hydrolysis of ATP to the transfer of proteins into and across the cell membrane, serving both as a receptor for the preprotein-SecB complex and as an ATP-driven molecular motor driving the stepwise translocation of polypeptide chains across the membrane. The protein is Protein translocase subunit SecA of Salmonella agona (strain SL483).